The primary structure comprises 359 residues: Ornithine carbamoyltransferase, mitochondrial (359 aa).

The transit peptide at 1–24 (MASLRSVLKSQSLRHTVRSYSSQT) directs the protein to the mitochondrion. Residues 87–90 (STRT), Arg-138, His-165, and Gln-168 contribute to the carbamoyl phosphate site. Positions 205, 271, 275, and 276 each coordinate L-ornithine. Cys-313 functions as the Proton acceptor in the catalytic mechanism. Residues 313–314 (CL) and Arg-340 each bind carbamoyl phosphate.

Belongs to the aspartate/ornithine carbamoyltransferase superfamily. OTCase family. In terms of assembly, homotrimer.

Its subcellular location is the mitochondrion matrix. The enzyme catalyses carbamoyl phosphate + L-ornithine = L-citrulline + phosphate + H(+). It participates in amino-acid biosynthesis; L-arginine biosynthesis; L-arginine from L-ornithine and carbamoyl phosphate: step 1/3. The chain is Ornithine carbamoyltransferase, mitochondrial (argB) from Emericella nidulans (strain FGSC A4 / ATCC 38163 / CBS 112.46 / NRRL 194 / M139) (Aspergillus nidulans).